A 110-amino-acid polypeptide reads, in one-letter code: Early E3B 12.7 kDa protein (110 aa).

Positions 1–16 (MKTALVLFFMLIPVWA) are cleaved as a signal peptide. The chain crosses the membrane as a helical span at residues 37–57 (YIGWVYGIMSGLVFVSSVVSL).

Belongs to the adenoviridae E3_14 family. Phosphorylated on serine; O-glycosylated, but not N-glycosylated.

Its subcellular location is the host membrane. Down-regulates the EGF receptor and prevents cytolysis by TNF. This is Early E3B 12.7 kDa protein from Homo sapiens (Human).